The sequence spans 152 residues: Transcriptional repressor NrdR (152 aa).

The segment at 3–34 is a zinc-finger region; sequence CPYCNASDTKVIDSRLAAEGAQVRRRRSCNSC. In terms of domain architecture, ATP-cone spans 49–139; the sequence is PRIIKSSGKI…VYRDFQDIDA (91 aa).

This sequence belongs to the NrdR family. The cofactor is Zn(2+).

Functionally, negatively regulates transcription of bacterial ribonucleotide reductase nrd genes and operons by binding to NrdR-boxes. The sequence is that of Transcriptional repressor NrdR from Psychrobacter arcticus (strain DSM 17307 / VKM B-2377 / 273-4).